The sequence spans 593 residues: NADH-quinone oxidoreductase subunit C/D (593 aa).

The segment at 1–184 (MTADTAVSIP…DPFSLTLAKQ (184 aa)) is NADH dehydrogenase I subunit C. The interval 208–593 (DYMFLNLGPN…IDFVMADVDR (386 aa)) is NADH dehydrogenase I subunit D.

In the N-terminal section; belongs to the complex I 30 kDa subunit family. The protein in the C-terminal section; belongs to the complex I 49 kDa subunit family. In terms of assembly, NDH-1 is composed of 13 different subunits. Subunits NuoB, CD, E, F, and G constitute the peripheral sector of the complex.

It localises to the cell inner membrane. The catalysed reaction is a quinone + NADH + 5 H(+)(in) = a quinol + NAD(+) + 4 H(+)(out). Functionally, NDH-1 shuttles electrons from NADH, via FMN and iron-sulfur (Fe-S) centers, to quinones in the respiratory chain. The immediate electron acceptor for the enzyme in this species is believed to be ubiquinone. Couples the redox reaction to proton translocation (for every two electrons transferred, four hydrogen ions are translocated across the cytoplasmic membrane), and thus conserves the redox energy in a proton gradient. The chain is NADH-quinone oxidoreductase subunit C/D from Ectopseudomonas mendocina (strain ymp) (Pseudomonas mendocina).